Here is a 1465-residue protein sequence, read N- to C-terminus: DNA polymerase III PolC-type (1465 aa).

The region spanning 427-583 (YVVFDVETTG…YDAEATGRLL (157 aa)) is the Exonuclease domain.

Belongs to the DNA polymerase type-C family. PolC subfamily.

It localises to the cytoplasm. It catalyses the reaction DNA(n) + a 2'-deoxyribonucleoside 5'-triphosphate = DNA(n+1) + diphosphate. Its function is as follows. Required for replicative DNA synthesis. This DNA polymerase also exhibits 3' to 5' exonuclease activity. The protein is DNA polymerase III PolC-type of Streptococcus pyogenes serotype M6 (strain ATCC BAA-946 / MGAS10394).